The sequence spans 460 residues: tRNA modification GTPase MnmE (460 aa).

(6S)-5-formyl-5,6,7,8-tetrahydrofolate is bound by residues Arg25, Glu87, and Arg126. Positions 221–381 constitute a TrmE-type G domain; that stretch reads GLKVAIVGRP…LETAIANLVQ (161 aa). Position 231 (Asn231) interacts with K(+). GTP is bound by residues 231-236, 250-256, and 275-278; these read NVGKSS, TDLPGTT, and DTAG. Position 235 (Ser235) interacts with Mg(2+). 3 residues coordinate K(+): Thr250, Leu252, and Thr255. Thr256 is a Mg(2+) binding site. Lys460 lines the (6S)-5-formyl-5,6,7,8-tetrahydrofolate pocket.

This sequence belongs to the TRAFAC class TrmE-Era-EngA-EngB-Septin-like GTPase superfamily. TrmE GTPase family. As to quaternary structure, homodimer. Heterotetramer of two MnmE and two MnmG subunits. It depends on K(+) as a cofactor.

It is found in the cytoplasm. Its function is as follows. Exhibits a very high intrinsic GTPase hydrolysis rate. Involved in the addition of a carboxymethylaminomethyl (cmnm) group at the wobble position (U34) of certain tRNAs, forming tRNA-cmnm(5)s(2)U34. The protein is tRNA modification GTPase MnmE of Picosynechococcus sp. (strain ATCC 27264 / PCC 7002 / PR-6) (Agmenellum quadruplicatum).